A 350-amino-acid polypeptide reads, in one-letter code: Atypical chemokine receptor 4 (350 aa).

Residues 1-42 (MALEQNQSTDYYYEENEMNGTYDYSQYELICIKEDVREFAKV) lie on the Extracellular side of the membrane. N-linked (GlcNAc...) asparagine glycosylation is found at Asn-6 and Asn-19. A helical transmembrane segment spans residues 43 to 63 (FLPVFLTIVFVIGLAGNSMVV). Over 64-87 (AIYAYYKKQRTKTDVYILNLAVAD) the chain is Cytoplasmic. Residues 88–108 (LLLLFTLPFWAVNAVHGWVLG) form a helical membrane-spanning segment. Residues 109 to 113 (KIMCK) are Extracellular-facing. A disulfide bond links Cys-112 and Cys-184. Residues 114 to 134 (ITSALYTLNFVSGMQFLACIS) traverse the membrane as a helical segment. Over 135-154 (IDRYVAVTKVPSQSGVGKPC) the chain is Cytoplasmic. A helical transmembrane segment spans residues 155 to 175 (WIICFCVWMAAILLSIPQLVF). Topologically, residues 176–201 (YTVNDNARCIPIFPRYLGTSMKALIQ) are extracellular. The helical transmembrane segment at 202-222 (MLEICIGFVVPFLIMGVCYFI) threads the bilayer. Topologically, residues 223–240 (TARTLMKMPNIKISRPLK) are cytoplasmic. A helical membrane pass occupies residues 241-261 (VLLTVVIVFIVTQLPYNIVKF). The Extracellular segment spans residues 262–289 (CRAIDIIYSLITSCNMSKRMDIAIQVTE). The chain crosses the membrane as a helical span at residues 290 to 310 (SIALFHSCLNPILYVFMGASF). The Cytoplasmic portion of the chain corresponds to 311 to 350 (KNYVMKVAKKYGSWRRQRQSVEEFPFDSEGPTEPTSTFSI).

This sequence belongs to the G-protein coupled receptor 1 family. Atypical chemokine receptor subfamily. Forms heteromers with CXCR3. Interacts with ARRB1 and ARRB2. In terms of processing, the Ser/Thr residues in the C-terminal cytoplasmic tail may be phosphorylated. As to expression, predominantly expressed in heart. Lower expression in lung, pancreas, spleen, colon, skeletal muscle and small intestine.

It localises to the early endosome. Its subcellular location is the recycling endosome. The protein resides in the cell membrane. In terms of biological role, atypical chemokine receptor that controls chemokine levels and localization via high-affinity chemokine binding that is uncoupled from classic ligand-driven signal transduction cascades, resulting instead in chemokine sequestration, degradation, or transcytosis. Also known as interceptor (internalizing receptor) or chemokine-scavenging receptor or chemokine decoy receptor. Acts as a receptor for chemokines CCL2, CCL8, CCL13, CCL19, CCL21 and CCL25. Chemokine-binding does not activate G-protein-mediated signal transduction but instead induces beta-arrestin recruitment, leading to ligand internalization. Plays an important role in controlling the migration of immune and cancer cells that express chemokine receptors CCR7 and CCR9, by reducing the availability of CCL19, CCL21, and CCL25 through internalization. Negatively regulates CXCR3-induced chemotaxis. Regulates T-cell development in the thymus. This is Atypical chemokine receptor 4 (ACKR4) from Homo sapiens (Human).